Here is a 544-residue protein sequence, read N- to C-terminus: MTPSELKRLYHITKVQLEYGLDELLPEHALTQLPKRLRKGLFWIKNKYPEKTLGERLRLALQELGPVWIKFGQMMSTRRDLFPPHLADQLALLQDQVAPFDGQLAKDQMEMELGGPLDNWFTDFDIKPLASASIAQVHTAKLKDSGREIVLKVIRPDIRPVIESDIRLMYRMARLVEQHIPEARRLKPVKVIEEYEKTLLDELDLRREASNAMQLRRNFEGSEELYVPEVILDLSSEHLMVSERIYGIQVSDIEQLERNGTNMKLLAERGVSVFFTQVFRDSFFHADMHPGNVFVNPDNPENPQWIGLDCGIVGTLNKEDKRYLAENLLGFFNSDYHKVAQLHVDSGWVPADTNVEEFEFAIRMVCEPIFAKPLGEISFGHVLLNLFNTARRFNMEVQPQLVLLQKTLLYVEGLGRQLYPQLDLWATAKPFLETWMAKQVGPAAFVTALSEKAPFWAEKLPELPDLVYDSLRQGKVLNQRMDKLYAGYRQSKRQQAKGQFLFNVGATLLICSAVLLTSNITVLASISAATGAAFWLFSWRAYRR.

Positions 123-501 (DFDIKPLASA…KRQQAKGQFL (379 aa)) constitute a Protein kinase domain. ATP-binding positions include 129 to 137 (LASASIAQV) and lysine 152. The active-site Proton acceptor is aspartate 287. A helical membrane pass occupies residues 515 to 537 (LLTSNITVLASISAATGAAFWLF).

This sequence belongs to the ABC1 family. UbiB subfamily.

Its subcellular location is the cell inner membrane. The protein operates within cofactor biosynthesis; ubiquinone biosynthesis [regulation]. In terms of biological role, is probably a protein kinase regulator of UbiI activity which is involved in aerobic coenzyme Q (ubiquinone) biosynthesis. The protein is Probable protein kinase UbiB of Aliivibrio fischeri (strain ATCC 700601 / ES114) (Vibrio fischeri).